Consider the following 391-residue polypeptide: MAKSKFERTKPHVNIGTIGHVDHGKTSLTAAITKFFGEFKAYDQIDAAPEERARGITISTAHVEYETPNRHYAHVDCPGHADYVKNMITGAAQMDGAILVVSAADGPMPQTREHILLARQVGVPAIVVFLNKCDQVDDAELLELVELEVRELLSKYDFPGDEVPIIKGSALAALEDSSKELGEDAVRSLMAAVDDYIPTPERPIDQPFLMPIEDVFSISGRGTVVTGRVERGIVKVGEEVEIVGIKATAKTTVTGVEMFRKLLDQGQAGDNIGALIRGVGREDVERGQVLCKPGSVKPHTKFKAEAYILTKDEGGRHTPFFTNYRPQFYFRTTDVTGVVTLPEGTEMVMPGDNVAMDVTLIVPIAMEEKLRFAIREGGRTVGAGIVSSIIE.

The region spanning 10–201 (KPHVNIGTIG…AVDDYIPTPE (192 aa)) is the tr-type G domain. Positions 19–26 (GHVDHGKT) are G1. Residue 19–26 (GHVDHGKT) participates in GTP binding. Residue Thr-26 participates in Mg(2+) binding. Residues 55–59 (GITIS) are G2. The segment at 76-79 (DCPG) is G3. GTP-binding positions include 76–80 (DCPGH) and 131–134 (NKCD). Positions 131 to 134 (NKCD) are G4. Residues 169 to 171 (SAL) are G5.

It belongs to the TRAFAC class translation factor GTPase superfamily. Classic translation factor GTPase family. EF-Tu/EF-1A subfamily. As to quaternary structure, monomer.

It localises to the cytoplasm. The catalysed reaction is GTP + H2O = GDP + phosphate + H(+). GTP hydrolase that promotes the GTP-dependent binding of aminoacyl-tRNA to the A-site of ribosomes during protein biosynthesis. This Brucella anthropi (strain ATCC 49188 / DSM 6882 / CCUG 24695 / JCM 21032 / LMG 3331 / NBRC 15819 / NCTC 12168 / Alc 37) (Ochrobactrum anthropi) protein is Elongation factor Tu.